Consider the following 332-residue polypeptide: MRNHRISLQDIATLAGVTKMTVSRYIRSPKKVAKETGERIAKIMEEINYIPNRAPGMLLNAQSYTLGILIPSFQNQLFADILAGIESVTSEHNYQTLIANYNYDRDSEEESVINLLSYNIDGIILSEKYHTIRTVKFLRSATIPVVELMDVQGERLDMEVGFDNRQAAFDMVCTMLEKRVRHKILYLGSKDDTRDEQRYQGYCDAMMLHNLSPLRMNPRAISSIHLGMQLMRDALSANPDLDGVFCTNDDIAMGALLLCRERNLAVPEQISIAGFHGLEIGRQMIPSLASVITPRFDIGRMAAQMLLSKIKNNDHNHNTVDLGYQIYHGNTL.

An HTH lacI-type domain is found at 6-60 (ISLQDIATLAGVTKMTVSRYIRSPKKVAKETGERIAKIMEEINYIPNRAPGMLLN). The segment at residues 8 to 27 (LQDIATLAGVTKMTVSRYIR) is a DNA-binding region (H-T-H motif).

Its function is as follows. Idn operon regulator. May repress gntKU and gntT genes when growing on L-idonate. The chain is HTH-type transcriptional regulator IdnR (idnR) from Escherichia coli (strain K12).